A 530-amino-acid chain; its full sequence is Developmental and secondary metabolism regulator VEL1 (530 aa).

A Velvet domain is found at 26–220; it reads NRSLWYQMTV…ADQGCQVRIR (195 aa). A Nuclear localization signal motif is present at residues 40–45; that stretch reads ERARAC. Residues 206-516 are disordered; sequence LSKTVADQGC…HDQGWYSRAD (311 aa). Residues 244–253 show a composition bias toward basic and acidic residues; sequence FERREEDFGR. Residues 295–305 show a composition bias toward pro residues; the sequence is YPPPPPPPSYE. Residues 347 to 356 show a composition bias toward polar residues; that stretch reads YAPTAQSPYS. A compositionally biased stretch (basic and acidic residues) spans 380–389; it reads VKHDLYDRRQ. A compositionally biased stretch (low complexity) spans 390 to 404; the sequence is STSSYVPPSPSVYST. A compositionally biased stretch (pro residues) spans 415-426; that stretch reads SYPPTPVAAPRP. The PEST stretch occupies residues 429–460; the sequence is MHSQTSLPALKIDQLVSPVSPLPPIEPQTGPA. Residues 478–490 are compositionally biased toward polar residues; the sequence is FAQSTRPLHNGQR.

This sequence belongs to the velvet family. VeA subfamily. In terms of assembly, component of the heterotrimeric velvet complex composed of LAE1, VEL1 and VEL2; VEL1 acting as a bridging protein between LAE1 and VEL2. Interacts with LAE1.

It is found in the nucleus. It localises to the cytoplasm. Functionally, component of the velvet transcription factor complex that controls sexual/asexual developmental ratio in response to light, promoting sexual development in the darkness while stimulating asexual sporulation under illumination. The velvet complex hat acts as a global regulator for secondary metabolite gene expression. Controls positively the expression of the gibberellins, fumonisins and fusarin C gene clusters. Controls the expression of the fusaric acid gene cluster. Controls negatively the expression of the bikaverin gene cluster. Regulates the expression of laeA. Plays a crucial role in virulence. The polypeptide is Developmental and secondary metabolism regulator VEL1 (Gibberella fujikuroi (strain CBS 195.34 / IMI 58289 / NRRL A-6831) (Bakanae and foot rot disease fungus)).